The chain runs to 183 residues: MARRGQQPPPQQQQAPPTQKNQAGKFNPAEFVKPGLTEEEVLEIKEAFDLFDTDGTQSIDPKELKAAMTSLGFEAKNQTIYQMISDLDTDGSGQIDFAEFLKLMTARISERDSKADIQKVFNLFDSERAGVITLKDLRKVAKELGETMDDSELQEMIDRADSDGDAQVTFEDFYNIMTKKTFA.

The interval methionine 1 to glutamate 30 is disordered. EF-hand domains lie at glutamate 39–glutamate 74, alanine 75–glutamate 110, aspartate 112–threonine 147, and methionine 148–alanine 183. Residues aspartate 52, aspartate 54, threonine 56, serine 58, glutamate 63, aspartate 88, aspartate 90, serine 92, glutamine 94, and glutamate 99 each coordinate Ca(2+).

Belongs to the centrin family. Monomer.

It localises to the cytoplasm. It is found in the cytoskeleton. Functionally, plays a fundamental role in microtubule organizing center structure and function. Component of the infraciliary lattice (ICL) and the ciliary basal bodies. In Paramecium tetraurelia, this protein is Caltractin ICL1c (Icl1c).